The following is a 239-amino-acid chain: Dihydromethanopterin reductase (acceptor) (239 aa).

2 consecutive 4Fe-4S ferredoxin-type domains span residues Met144 to Gly175 and Val176 to Val205. Residues Cys153, Cys156, Cys159, Cys165, Cys185, Cys188, Cys191, and Cys195 each contribute to the [4Fe-4S] cluster site.

In terms of assembly, homodimer. The cofactor is [4Fe-4S] cluster.

It catalyses the reaction 5,6,7,8-tetrahydromethanopterin + A = 7,8-dihydromethanopterin + AH2. The protein operates within cofactor biosynthesis; 5,6,7,8-tetrahydromethanopterin biosynthesis. Functionally, involved in the biosynthesis of tetrahydromethanopterin, a coenzyme used in methanogenesis. Catalyzes the reduction of dihydromethanopterin (H(2)MPT) to tetrahydromethanopterin (H(4)MPT). Ferredoxin may serve as an electron donor. The polypeptide is Dihydromethanopterin reductase (acceptor) (Methanosarcina mazei (strain ATCC BAA-159 / DSM 3647 / Goe1 / Go1 / JCM 11833 / OCM 88) (Methanosarcina frisia)).